A 363-amino-acid polypeptide reads, in one-letter code: tRNA/tmRNA (uracil-C(5))-methyltransferase (363 aa).

S-adenosyl-L-methionine contacts are provided by Gln187, Tyr215, Asn220, Glu236, and Asp296. Catalysis depends on Cys321, which acts as the Nucleophile. The active-site Proton acceptor is the Glu355.

This sequence belongs to the class I-like SAM-binding methyltransferase superfamily. RNA M5U methyltransferase family. TrmA subfamily.

It catalyses the reaction uridine(54) in tRNA + S-adenosyl-L-methionine = 5-methyluridine(54) in tRNA + S-adenosyl-L-homocysteine + H(+). The enzyme catalyses uridine(341) in tmRNA + S-adenosyl-L-methionine = 5-methyluridine(341) in tmRNA + S-adenosyl-L-homocysteine + H(+). In terms of biological role, dual-specificity methyltransferase that catalyzes the formation of 5-methyluridine at position 54 (m5U54) in all tRNAs, and that of position 341 (m5U341) in tmRNA (transfer-mRNA). In Haemophilus influenzae (strain 86-028NP), this protein is tRNA/tmRNA (uracil-C(5))-methyltransferase.